Consider the following 186-residue polypeptide: Peptidyl-tRNA hydrolase (186 aa).

Tyr-14 is a tRNA binding site. The Proton acceptor role is filled by His-19. TRNA-binding residues include Tyr-60 and Asn-62.

The protein belongs to the PTH family. As to quaternary structure, monomer.

It localises to the cytoplasm. It catalyses the reaction an N-acyl-L-alpha-aminoacyl-tRNA + H2O = an N-acyl-L-amino acid + a tRNA + H(+). Its function is as follows. Hydrolyzes ribosome-free peptidyl-tRNAs (with 1 or more amino acids incorporated), which drop off the ribosome during protein synthesis, or as a result of ribosome stalling. Functionally, catalyzes the release of premature peptidyl moieties from peptidyl-tRNA molecules trapped in stalled 50S ribosomal subunits, and thus maintains levels of free tRNAs and 50S ribosomes. The protein is Peptidyl-tRNA hydrolase of Mycoplasmopsis pulmonis (strain UAB CTIP) (Mycoplasma pulmonis).